A 326-amino-acid chain; its full sequence is Polycomb complex protein BMI-1 (326 aa).

An RING-type zinc finger spans residues 18 to 57 (CVLCGGYFIDATTIIECLHSFCKTCIVRYLETSKYCPICD). A Nuclear localization signal motif is present at residues 81 to 95 (KLVPGLFKNEMKRRR). The interval 162–182 (RYLRCPAAMTVMHLRKFLRSK) is interaction with PHC2. The interaction with E4F1 stretch occupies residues 164–228 (LRCPAAMTVM…GPLPLKYRVR (65 aa)). Residues 236-326 (ISHQRDGLTN…VNGSSATSSG (91 aa)) are disordered. 3 stretches are compositionally biased toward low complexity: residues 266–278 (PSTS…PSTP), 290–303 (SSTM…PSGN), and 315–326 (SSVNGSSATSSG).

Component of a PRC1-like complex. Identified in a PRC1-like HPRC-H complex with CBX2, CBX4, CBX8, PHC1, PHC2, PHC3 RING1 and RNF2. Interacts with RNF2/RING2. Interacts with RING1. Part of a complex that contains RNF2, UB2D3 and BMI1, where RNF2 and BMI1 form a tight heterodimer, and UB2D3 interacts only with RNF2. The complex composed of RNF2, UB2D3 and BMI1 binds nucleosomes, and has activity only with nucleosomal histone H2A. Interacts with CBX7 and CBX8. Interacts with SPOP. Part of a complex consisting of BMI1, CUL3 and SPOP. Interacts with E4F1. Interacts with PHC2. Interacts with zinc finger protein ZNF277. May be part of a complex including at least ZNF277, BMI1 and RNF2/RING2. Post-translationally, may be polyubiquitinated; which does not lead to proteasomal degradation. Monoubiquitinated.

It is found in the nucleus. It localises to the cytoplasm. In terms of biological role, component of a Polycomb group (PcG) multiprotein PRC1-like complex, a complex class required to maintain the transcriptionally repressive state of many genes, including Hox genes, throughout development. PcG PRC1 complex acts via chromatin remodeling and modification of histones; it mediates monoubiquitination of histone H2A 'Lys-119', rendering chromatin heritably changed in its expressibility. The complex composed of RNF2, UB2D3 and BMI1 binds nucleosomes, and has activity only with nucleosomal histone H2A. In the PRC1-like complex, regulates the E3 ubiquitin-protein ligase activity of RNF2/RING2. This chain is Polycomb complex protein BMI-1 (BMI1), found in Bos taurus (Bovine).